Here is a 1156-residue protein sequence, read N- to C-terminus: MLQQAERRIPPFRRRKSTPHEQRLSHHSSNNNNNIDSMSKAIAQYTEDGVHAVFEQSGESGRSFNYSESIRIASESVPEQQITAYLVKIQRGGFIQPFGSMIAVDEPSFRILGYSDNARDMLGITPQSVPSLDDKNDAAFALGPQSVPSLDDKNDAAFALGTDVRALFTHSSALLLEKAFSAREISLMNPIWIHSRTSGKPFYGILHRIDVGIVIDLEPARTEDPALSIAGAVQSQEALVRAISQLQSLPSADVKLLCDTVVESVRELTGYDRVMVYKFHEDEHGEVVSESKRPDLEPYIGLHYPATDIPQASRFLFKQNRVRMIVDCHASAVRVVQDEALVQPLCLVGSTLGAPHGCHAQYMANMGSIASLVMAVIINGNDEEGVGGRSSMRLWGLVVCHHTSARCIPFPLRYACEFLMQAFGLQLNMELQLAAQSLEKRVLRTQTLLCDMLLRDSPTGIVTQSPSIMDLVKCDGAALYFQGNYYPLGVTPTEAQIRDIIEWLLAFHGDSTGLSTDSLGDAGYPGLPRLGMQFVGWQVAYITEKDFLFWFRSHTAKEIKWGGAKLILRTRMMGQRMHPLSSFKAFLEVVKSRSLPWENAEMDAIHSLQLILRDSFKDAEHRNSKAVVDPHVSEQELQGVDELSSVAREMVRLIETATAPIFAVDVDGHVNGWNAKVSELTGLPVEEAMGKSLVHDLVFKESEETVNKLLSREEDKNVETKMRTFGKEHQNKAAFLVVNACSSKHFTNNVVGVCFVGQNVTGQKIVMHKFINIQGDYKAIVHSPNPLIPPIFASDDNTCCLEWNTAMEKLDPSNENVTVGGVDVIGKMLVGEVFGSCCQLKGSDSITKFMIVLHNALGGQDTDKFPFSFLDRHGKYVQTFLTANKRVNMEGQIIGAFCFLQIMSPELQQALKAQRQQEKEFLGRMKELAYICQGVKKPLSGIRFTNSLLEATSLTNEQKQFLETSVACEKQMLKIIRDVDLESIEDGSLELEKGEFLLGNVINAVVSQVILLLRERNLQLIRDIPEEIKTLAVYGDQLRIQQVLSDFLLNIVRYAPSPDGWVEIHVRPRIKQISDGLTLLHAEFRMVCPGEGLPPELIQDMFNNSRWGTQEGLGLSMSRKILKLMNGEVQYIREAERCYFYVLLELPVTRRSSKKC.

A disordered region spans residues 1-35; sequence MLQQAERRIPPFRRRKSTPHEQRLSHHSSNNNNNI. One can recognise a GAF domain in the interval 253-431; the sequence is DVKLLCDTVV…AFGLQLNMEL (179 aa). Cys358 contributes to the phytochromobilin binding site. 2 PAS domains span residues 646 to 717 and 776 to 853; these read VARE…EDKN and DYKA…MIVL. Positions 930 to 1150 constitute a Histidine kinase domain; the sequence is YICQGVKKPL…YVLLELPVTR (221 aa).

This sequence belongs to the phytochrome family. Homodimer. Contains one covalently linked phytochromobilin chromophore.

Functionally, regulatory photoreceptor which exists in two forms that are reversibly interconvertible by light: the Pr form that absorbs maximally in the red region of the spectrum and the Pfr form that absorbs maximally in the far-red region. Photoconversion of Pr to Pfr induces an array of morphogenic responses, whereas reconversion of Pfr to Pr cancels the induction of those responses. Pfr controls the expression of a number of nuclear genes including those encoding the small subunit of ribulose-bisphosphate carboxylase, chlorophyll A/B binding protein, protochlorophyllide reductase, rRNA, etc. It also controls the expression of its own gene(s) in a negative feedback fashion. The chain is Phytochrome B (PHYB) from Glycine max (Soybean).